A 211-amino-acid chain; its full sequence is Small ribosomal subunit protein uS3 (211 aa).

Positions 38-106 (LRSFVKKTFH…EVELHIVEVK (69 aa)) constitute a KH type-2 domain.

This sequence belongs to the universal ribosomal protein uS3 family. Part of the 30S ribosomal subunit. Forms a tight complex with proteins S10 and S14.

Binds the lower part of the 30S subunit head. Binds mRNA in the 70S ribosome, positioning it for translation. The sequence is that of Small ribosomal subunit protein uS3 from Anaplasma phagocytophilum (strain HZ).